The sequence spans 778 residues: Acyl-homoserine lactone acylase PvdQ (778 aa).

The N-terminal stretch at 1 to 25 (MTISRQFTGLTLAGLFLGLSLSAQA) is a signal peptide. A propeptide spans 196-218 (IENNARAYQLADTRLQRFALDRG) (spacer peptide). The Nucleophile role is filled by S219.

This sequence belongs to the peptidase S45 family. As to quaternary structure, heterodimer of an alpha subunit and a beta subunit processed from the same precursor.

The protein localises to the periplasm. It carries out the reaction an N-acyl-L-homoserine lactone + H2O = L-homoserine lactone + a carboxylate. Functionally, catalyzes the deacylation of acyl-homoserine lactone (AHL or acyl-HSL), releasing homoserine lactone (HSL) and the corresponding fatty acid. Possesses a specificity for the degradation of long-chain acyl-HSLs (side chains of 11 to 14 carbons in length). This chain is Acyl-homoserine lactone acylase PvdQ (pvdQ), found in Pseudomonas fluorescens (strain Pf0-1).